A 129-amino-acid polypeptide reads, in one-letter code: Small ribosomal subunit protein uS11 (129 aa).

This sequence belongs to the universal ribosomal protein uS11 family. In terms of assembly, part of the 30S ribosomal subunit. Interacts with proteins S7 and S18. Binds to IF-3.

In terms of biological role, located on the platform of the 30S subunit, it bridges several disparate RNA helices of the 16S rRNA. Forms part of the Shine-Dalgarno cleft in the 70S ribosome. The chain is Small ribosomal subunit protein uS11 from Azoarcus sp. (strain BH72).